We begin with the raw amino-acid sequence, 218 residues long: Peptide methionine sulfoxide reductase MsrA (218 aa).

The active site involves C57.

Belongs to the MsrA Met sulfoxide reductase family.

The enzyme catalyses L-methionyl-[protein] + [thioredoxin]-disulfide + H2O = L-methionyl-(S)-S-oxide-[protein] + [thioredoxin]-dithiol. It carries out the reaction [thioredoxin]-disulfide + L-methionine + H2O = L-methionine (S)-S-oxide + [thioredoxin]-dithiol. Functionally, has an important function as a repair enzyme for proteins that have been inactivated by oxidation. Catalyzes the reversible oxidation-reduction of methionine sulfoxide in proteins to methionine. The sequence is that of Peptide methionine sulfoxide reductase MsrA from Brucella melitensis biotype 2 (strain ATCC 23457).